The chain runs to 599 residues: UvrABC system protein C (599 aa).

The GIY-YIG domain occupies 19-95 (ESTGVYIFYD…IKKYRPIMNV (77 aa)). The UVR domain maps to 206–241 (EEIIEKLYDQMQEYSKNLEFEKAAKIRDKIRLLQNL).

This sequence belongs to the UvrC family. In terms of assembly, interacts with UvrB in an incision complex.

Its subcellular location is the cytoplasm. In terms of biological role, the UvrABC repair system catalyzes the recognition and processing of DNA lesions. UvrC both incises the 5' and 3' sides of the lesion. The N-terminal half is responsible for the 3' incision and the C-terminal half is responsible for the 5' incision. The sequence is that of UvrABC system protein C from Dictyoglomus thermophilum (strain ATCC 35947 / DSM 3960 / H-6-12).